The chain runs to 415 residues: Cell division control protein 11 (415 aa).

N-acetylserine is present on Ser-2. The residue at position 2 (Ser-2) is a Phosphoserine. The short motif at 12-19 is the Basic motif element; sequence RKRKHLKR. The Septin-type G domain maps to 19-298; it reads RGITFTVMIV…ERYRTEALSG (280 aa). The tract at residues 29–36 is G1 motif; sequence GQSGSGRS. GTP is bound by residues 29 to 36, Gly-92, 172 to 180, Gly-230, and Arg-247; these read GQSGSGRS and KSDSLTRDE. Residues 89 to 92 are G3 motif; that stretch reads DTPG. The tract at residues 171–174 is G4 motif; the sequence is SKSD. At Ser-305 the chain carries Phosphoserine. The interval 307-360 is disordered; it reads RPNLTKLNGSSSSSTTTRRNTNPFKQSNNINNDVLNPASDMHGQSTGENNETYM. Residues 316–328 show a composition bias toward low complexity; it reads SSSSSTTTRRNTN. Phosphothreonine is present on Thr-327. Composition is skewed to polar residues over residues 329–340 and 348–359; these read PFKQSNNINNDV and HGQSTGENNETY. The stretch at 354-414 forms a coiled coil; that stretch reads ENNETYMTRE…LEKEAKIKQE (61 aa). Residue Lys-412 forms a Glycyl lysine isopeptide (Lys-Gly) (interchain with G-Cter in SUMO) linkage.

The protein belongs to the TRAFAC class TrmE-Era-EngA-EngB-Septin-like GTPase superfamily. Septin GTPase family. In terms of assembly, component of the septin complex which consists of CDC3, CDC10, CDC11, CDC12 and probably SHS1 and rearranges to a cortical collar of highly ordered filaments at the mother-bud-neck. A complex formed by CDC3, CDC10, CDC11 and CDC12 is capable of forming long filaments in vitro and the components seem to be present in a 2:2:2:2 arrangement in vivo. The filaments are proposed to be formed by the end-to-end polymerization of CDC3-CDC12-CDC11 complexes with CDC10 serving as a bridge to bundle the polymers into paired filaments. Component of the GIN4 complex composed of at least BNI5, CDC3, CDC10, CDC11, CDC12, GIN4, NAP1 and SHS1. Self-associates. Interacts with BEM4, KCC4, SPR28 and SYP1. Interacts with BNI5. Sumoylated during mitosis on the mother cell side of the bud neck. Sumoylation probably plays a central role in regulating septin ring disassembly during the cell cycle.

The protein resides in the membrane. It is found in the bud neck. In terms of biological role, septins are GTPases involved in cytokinesis that assemble early in the cell cycle as a patch at the incipient bud site and form a ring approximate 15 minutes before bud emergence, which transforms into an hour-glass shaped collar of cortical filaments that spans both sides of the mother-bud neck. This collar persists until just before cytokinesis, when it splits into two rings that occupy opposite sides of the neck. The septins at the bud neck serve as a structural scaffold that recruits different components involved in diverse processes at specific stages during the cell cycle. Many proteins bind asymmetrically to the septin collar. The septin assembly is regulated by protein kinases GIN4 and/or CLA4. May act by recruiting MYO1 and HOF1, a protein involved in septation, to the site of cleavage. Septins are also involved in cell morphogenesis, bud site selection, chitin deposition, cell cycle regulation, cell compartmentalization and spore wall formation. CDCd11 with SHS1 11 are involved in the recruitment of BNI5 and thereby ensure efficient localization at the bud neck of MYO1, the type II myosin of the actomyosin contractile ring. The protein is Cell division control protein 11 of Saccharomyces cerevisiae (strain ATCC 204508 / S288c) (Baker's yeast).